The sequence spans 146 residues: Hemoglobin subunit beta (146 aa).

Val1 carries the N-acetylvaline modification. One can recognise a Globin domain in the interval 2-146 (HLSGEEKGAV…VATALAHKYH (145 aa)). Thr12 is modified (phosphothreonine). Ser44 bears the Phosphoserine mark. Position 59 is an N6-acetyllysine (Lys59). His63 provides a ligand contact to heme b. Residue Lys82 is modified to N6-acetyllysine. His92 is a binding site for heme b. At Cys93 the chain carries S-nitrosocysteine. Lys144 is subject to N6-acetyllysine.

This sequence belongs to the globin family. In terms of assembly, heterotetramer of two alpha chains and two beta chains. As to expression, red blood cells.

Functionally, involved in oxygen transport from the lung to the various peripheral tissues. This is Hemoglobin subunit beta (HBB) from Tadarida brasiliensis (Brazilian free-tailed bat).